Here is a 617-residue protein sequence, read N- to C-terminus: UvrABC system protein C (617 aa).

One can recognise a GIY-YIG domain in the interval 22-100 (KLPGVYRFFD…IKALSPKYNI (79 aa)). Residues 209–244 (DELTRTLQHKMQTAAANLQFEEAARYRDQIQALGII) form the UVR domain.

Belongs to the UvrC family. Interacts with UvrB in an incision complex.

It is found in the cytoplasm. The UvrABC repair system catalyzes the recognition and processing of DNA lesions. UvrC both incises the 5' and 3' sides of the lesion. The N-terminal half is responsible for the 3' incision and the C-terminal half is responsible for the 5' incision. In Neisseria gonorrhoeae (strain ATCC 700825 / FA 1090), this protein is UvrABC system protein C.